The chain runs to 151 residues: Single-stranded DNA-binding protein, mitochondrial (151 aa).

A mitochondrion-targeting transit peptide spans 1–16 (MFRRPVLQVFRQFVRQ). One can recognise an SSB domain in the interval 30-141 (LNRVQLLGRV…IIADNIIFLS (112 aa)). Phosphoserine occurs at positions 67 and 79. An N6-acetyllysine modification is found at Lys-113. Lys-122 carries the N6-succinyllysine modification.

In terms of assembly, homotetramer. Interacts with MPG/AAG, through inhibition of its glycosylase activity it potentially prevents formation of DNA breaks in ssDNA, ensuring that base removal primarily occurs in dsDNA. Interacts with POLDIP2. Interacts with PRIMPOL.

The protein localises to the mitochondrion. It localises to the mitochondrion matrix. It is found in the mitochondrion nucleoid. In terms of biological role, binds preferentially and cooperatively to pyrimidine rich single-stranded DNA (ss-DNA). In vitro, required to maintain the copy number of mitochondrial DNA (mtDNA) and plays a crucial role during mtDNA replication by stimulating the activity of the replisome components POLG and TWNK at the replication fork. Promotes the activity of the gamma complex polymerase POLG, largely by organizing the template DNA and eliminating secondary structures to favor ss-DNA conformations that facilitate POLG activity. In addition it is able to promote the 5'-3' unwinding activity of the mtDNA helicase TWNK. May also function in mtDNA repair. The polypeptide is Single-stranded DNA-binding protein, mitochondrial (Ssbp1) (Rattus norvegicus (Rat)).